The chain runs to 177 residues: Large ribosomal subunit protein uL10 (177 aa).

The protein belongs to the universal ribosomal protein uL10 family. As to quaternary structure, part of the ribosomal stalk of the 50S ribosomal subunit. The N-terminus interacts with L11 and the large rRNA to form the base of the stalk. The C-terminus forms an elongated spine to which L12 dimers bind in a sequential fashion forming a multimeric L10(L12)X complex.

Functionally, forms part of the ribosomal stalk, playing a central role in the interaction of the ribosome with GTP-bound translation factors. This chain is Large ribosomal subunit protein uL10, found in Legionella pneumophila (strain Paris).